We begin with the raw amino-acid sequence, 1386 residues long: Putative ATP-dependent RNA helicase DHX57 (1386 aa).

Over residues 1–11 (MSSSVRRKGKP) the composition is skewed to basic residues. Disordered stretches follow at residues 1 to 106 (MSSS…MTSE) and 120 to 147 (EQDA…NDER). Gly residues-rich tracts occupy residues 12–23 (GKGGGKGSSRGG) and 35–50 (GSGG…GGGN). Positions 101–125 (LHMTSENQEKVKALLRDLQEQDADA) form a coiled coil. A phosphoserine mark is found at Ser127 and Ser132. The segment covering 133 to 143 (GEEEDDEPDCC) has biased composition (acidic residues). The UBA domain maps to 180–220 (TVSPFAVQKLSRYGFNTERCQAVLRMCDGDVGASLEHLLTQ). The C3H1-type zinc-finger motif lies at 299–326 (ENSLEICKFYLKGNCKFGSKCRFKHEVP). Ser475, Ser477, and Ser480 each carry phosphoserine. A Helicase ATP-binding domain is found at 554–721 (LNLLRKHQVV…FNSCPVITIP (168 aa)). 567–574 (GMTGCGKT) contributes to the ATP binding site. The DEVH box signature appears at 668 to 671 (DEVH). The Helicase C-terminal domain maps to 830 to 1010 (LIEALLEWIV…QLCLRIKILE (181 aa)).

The protein belongs to the DEAD box helicase family. DEAH subfamily.

It catalyses the reaction ATP + H2O = ADP + phosphate + H(+). Probable ATP-binding RNA helicase. The polypeptide is Putative ATP-dependent RNA helicase DHX57 (DHX57) (Homo sapiens (Human)).